The following is an 84-amino-acid chain: Large ribosomal subunit protein bL27 (84 aa).

A disordered region spans residues 1–21 (MAHKKGGGSTKNGRDSNPKYL).

Belongs to the bacterial ribosomal protein bL27 family.

This is Large ribosomal subunit protein bL27 from Chlorobaculum parvum (strain DSM 263 / NCIMB 8327) (Chlorobium vibrioforme subsp. thiosulfatophilum).